The following is an 838-amino-acid chain: Translation initiation factor IF-2 (838 aa).

The disordered stretch occupies residues 1–235 (MSDTDGKKPL…RSLAAMKREQ (235 aa)). Residues 18-27 (SGQVKQSFSH) are compositionally biased toward polar residues. The span at 50-60 (SGSSTTTSSPS) shows a compositional bias: low complexity. Basic and acidic residues predominate over residues 88 to 156 (KLREVDDAKR…AARRAEEAKR (69 aa)). The span at 162-177 (PAAAQPDAADSRASAP) shows a compositional bias: low complexity. Basic and acidic residues predominate over residues 187 to 208 (SRKEREREADRDRTTKKDDSRR). A tr-type G domain is found at 335–509 (PRPPIITIMG…ELLDLRANPK (175 aa)). Residues 344-351 (GHVDHGKT) form a G1 region. Position 344–351 (344–351 (GHVDHGKT)) interacts with GTP. The segment at 369–373 (GITQH) is G2. The G3 stretch occupies residues 391–394 (DTPG). GTP contacts are provided by residues 391-395 (DTPGH) and 445-448 (NKID). The interval 445 to 448 (NKID) is G4. Residues 481 to 483 (SAK) are G5.

The protein belongs to the TRAFAC class translation factor GTPase superfamily. Classic translation factor GTPase family. IF-2 subfamily.

Its subcellular location is the cytoplasm. Functionally, one of the essential components for the initiation of protein synthesis. Protects formylmethionyl-tRNA from spontaneous hydrolysis and promotes its binding to the 30S ribosomal subunits. Also involved in the hydrolysis of GTP during the formation of the 70S ribosomal complex. The sequence is that of Translation initiation factor IF-2 from Cereibacter sphaeroides (strain ATCC 17025 / ATH 2.4.3) (Rhodobacter sphaeroides).